The primary structure comprises 432 residues: Trigger factor (432 aa).

Positions 161–246 (DDRVTIDFVG…LKKIENMVLP (86 aa)) constitute a PPIase FKBP-type domain.

Belongs to the FKBP-type PPIase family. Tig subfamily.

The protein resides in the cytoplasm. The catalysed reaction is [protein]-peptidylproline (omega=180) = [protein]-peptidylproline (omega=0). In terms of biological role, involved in protein export. Acts as a chaperone by maintaining the newly synthesized protein in an open conformation. Functions as a peptidyl-prolyl cis-trans isomerase. In Haemophilus influenzae (strain ATCC 51907 / DSM 11121 / KW20 / Rd), this protein is Trigger factor (tig).